Here is a 115-residue protein sequence, read N- to C-terminus: NAD(P)H-quinone oxidoreductase subunit M (115 aa).

Belongs to the complex I NdhM subunit family. NDH-1 can be composed of about 15 different subunits; different subcomplexes with different compositions have been identified which probably have different functions.

The protein resides in the cellular thylakoid membrane. The catalysed reaction is a plastoquinone + NADH + (n+1) H(+)(in) = a plastoquinol + NAD(+) + n H(+)(out). It carries out the reaction a plastoquinone + NADPH + (n+1) H(+)(in) = a plastoquinol + NADP(+) + n H(+)(out). In terms of biological role, NDH-1 shuttles electrons from an unknown electron donor, via FMN and iron-sulfur (Fe-S) centers, to quinones in the respiratory and/or the photosynthetic chain. The immediate electron acceptor for the enzyme in this species is believed to be plastoquinone. Couples the redox reaction to proton translocation, and thus conserves the redox energy in a proton gradient. Cyanobacterial NDH-1 also plays a role in inorganic carbon-concentration. This Prochlorococcus marinus (strain MIT 9313) protein is NAD(P)H-quinone oxidoreductase subunit M.